A 403-amino-acid polypeptide reads, in one-letter code: Phosphopentomutase 2 (403 aa).

Asp13, Asp298, His303, Asp339, His340, and His351 together coordinate Mn(2+).

It belongs to the phosphopentomutase family. Mn(2+) serves as cofactor.

The protein resides in the cytoplasm. The enzyme catalyses 2-deoxy-alpha-D-ribose 1-phosphate = 2-deoxy-D-ribose 5-phosphate. The catalysed reaction is alpha-D-ribose 1-phosphate = D-ribose 5-phosphate. The protein operates within carbohydrate degradation; 2-deoxy-D-ribose 1-phosphate degradation; D-glyceraldehyde 3-phosphate and acetaldehyde from 2-deoxy-alpha-D-ribose 1-phosphate: step 1/2. Its function is as follows. Isomerase that catalyzes the conversion of deoxy-ribose 1-phosphate (dRib-1-P) and ribose 1-phosphate (Rib-1-P) to deoxy-ribose 5-phosphate (dRib-5-P) and ribose 5-phosphate (Rib-5-P), respectively. The polypeptide is Phosphopentomutase 2 (Streptococcus agalactiae serotype Ia (strain ATCC 27591 / A909 / CDC SS700)).